The primary structure comprises 481 residues: Deoxyribodipyrimidine photo-lyase (481 aa).

The Photolyase/cryptochrome alpha/beta domain maps to 1–136 (MQLFWHRRDL…AHAQFHDAVH (136 aa)). Position 228 (Y228) interacts with FAD. R232 lines the DNA pocket. Residue 240 to 244 (TSRLS) participates in FAD binding. Interaction with DNA regions lie at residues 283 to 290 (QLAWREFY) and 349 to 350 (NR). 380 to 382 (DHD) lines the FAD pocket. A DNA-binding site is contributed by Q412.

Belongs to the DNA photolyase class-1 family. In terms of assembly, monomer. It depends on FAD as a cofactor. The cofactor is coenzyme F420-(gamma-Glu)n.

It carries out the reaction cyclobutadipyrimidine (in DNA) = 2 pyrimidine residues (in DNA).. Involved in repair of UV radiation-induced DNA damage. Catalyzes the light-dependent monomerization (300-600 nm) of cyclobutyl pyrimidine dimers (in cis-syn configuration), which are formed between adjacent bases on the same DNA strand upon exposure to ultraviolet radiation. This chain is Deoxyribodipyrimidine photo-lyase (phr), found in Halobacterium salinarum (strain ATCC 700922 / JCM 11081 / NRC-1) (Halobacterium halobium).